Consider the following 801-residue polypeptide: N,N'-diacetylchitobiose phosphorylase (801 aa).

N-acetyl-alpha-D-glucosamine 1-phosphate-binding residues include R333, R343, R349, D350, W490, and D492. Catalysis depends on D492, which acts as the Proton donor. Positions 492, 636, and 637 each coordinate N-acetyl-D-glucosamine. N-acetyl-alpha-D-glucosamine 1-phosphate contacts are provided by E637, H644, Q690, T709, and G710.

The protein belongs to the glycosyl hydrolase 94 family. Homodimer.

The enzyme catalyses N,N'-diacetylchitobiose + phosphate = N-acetyl-alpha-D-glucosamine 1-phosphate + N-acetyl-D-glucosamine. Its function is as follows. Catalyzes the reversible phosphorolysis of chitobiose (N,N'-diacetylchitobiose or (GlcNAc)(2)) into N-acetyl-alpha-D-glucosamine 1-phosphate (GlcNAc-1-P) and N-acetyl-D-glucosamine (GlcNAc) with inversion of the anomeric configuration. In the synthetic reaction, is also active on glucose-1-phosphate with 10% activity as compared with that on GlcNAc-1-P. GlcNAc is the best acceptor substrate, but the enzyme can use aryl-beta-glycosides of GlcNAc as the acceptor substrate with 10-20% activities of GlcNAc. Shows no phosphorolytic activity on cellobiose. The sequence is that of N,N'-diacetylchitobiose phosphorylase from Vibrio proteolyticus (Aeromonas proteolytica).